Consider the following 480-residue polypeptide: Cytochrome c oxidase subunit 1 (480 aa).

The helical transmembrane segment at 22–42 threads the bilayer; that stretch reads ISYLWLAYWFGMIGFYMSVLI. Residues Glu45 and Gly50 each contribute to the Ca(2+) site. The next 8 membrane-spanning stretches (helical) occupy residues 64–84, 109–129, 151–171, 194–214, 240–260, 278–298, 309–329, and 343–363; these read LLFTLHGLIMVFFNIMTGLFG, SLLLQPIGFVLVVSSVYLEIG, LIIFGLLAAGIASTLSSINFI, IVLTSFLLLLSLPVVTAVFLM, LFWFFGHPEVYIMILPGFGII, MILAMGSIALLGCLVWGHHMY, YFTTVTILIALPTGNKIFNWV, and LILFAVLFIVNFVIGGTTGVV. Residue His69 participates in Fe(II)-heme a binding. His246 lines the Cu cation pocket. The 1'-histidyl-3'-tyrosine (His-Tyr) cross-link spans 246 to 250; it reads HPEVY. Tyr250 lines the O2 pocket. His295 and His296 together coordinate Cu cation. Positions 374 and 375 each coordinate Mg(2+). Residue His382 participates in heme a3 binding. The next 2 membrane-spanning stretches (helical) occupy residues 382-402 and 416-436; these read HFHFVLSIGAIISLICFIVYI and LSLMAPIFMIAVLFTFLPMHF. Fe(II)-heme a is bound at residue His384. Residue Pro447 participates in Ca(2+) binding. The helical transmembrane segment at 458-478 threads the bilayer; it reads FICTLGATMMLVLKLTVLFII.

Belongs to the heme-copper respiratory oxidase family. In terms of assembly, component of the cytochrome c oxidase (complex IV, CIV), a multisubunit enzyme composed of a catalytic core of 3 subunits and several supernumerary subunits. The complex exists as a monomer or a dimer and forms supercomplexes (SCs) in the inner mitochondrial membrane with ubiquinol-cytochrome c oxidoreductase (cytochrome b-c1 complex, complex III, CIII). Heme is required as a cofactor. The cofactor is Cu cation.

The protein resides in the mitochondrion inner membrane. It catalyses the reaction 4 Fe(II)-[cytochrome c] + O2 + 8 H(+)(in) = 4 Fe(III)-[cytochrome c] + 2 H2O + 4 H(+)(out). The protein operates within energy metabolism; oxidative phosphorylation. Functionally, component of the cytochrome c oxidase, the last enzyme in the mitochondrial electron transport chain which drives oxidative phosphorylation. The respiratory chain contains 3 multisubunit complexes succinate dehydrogenase (complex II, CII), ubiquinol-cytochrome c oxidoreductase (cytochrome b-c1 complex, complex III, CIII) and cytochrome c oxidase (complex IV, CIV), that cooperate to transfer electrons derived from NADH and succinate to molecular oxygen, creating an electrochemical gradient over the inner membrane that drives transmembrane transport and the ATP synthase. Cytochrome c oxidase is the component of the respiratory chain that catalyzes the reduction of oxygen to water. Electrons originating from reduced cytochrome c in the intermembrane space (IMS) are transferred via the dinuclear copper A center (CU(A)) of subunit 2 and heme A of subunit 1 to the active site in subunit 1, a binuclear center (BNC) formed by heme A3 and copper B (CU(B)). The BNC reduces molecular oxygen to 2 water molecules using 4 electrons from cytochrome c in the IMS and 4 protons from the mitochondrial matrix. In Theileria annulata, this protein is Cytochrome c oxidase subunit 1 (MT-CO1).